The chain runs to 78 residues: Large ribosomal subunit protein bL28 (78 aa).

The disordered stretch occupies residues 1–21; that stretch reads MSRVCQVTGKRPMVGNNRSHA.

The protein belongs to the bacterial ribosomal protein bL28 family.

In Shewanella halifaxensis (strain HAW-EB4), this protein is Large ribosomal subunit protein bL28.